We begin with the raw amino-acid sequence, 512 residues long: Histidine ammonia-lyase (512 aa).

The segment at residues 141–143 is a cross-link (5-imidazolinone (Ala-Gly)); it reads ASG. At serine 142 the chain carries 2,3-didehydroalanine (Ser).

Belongs to the PAL/histidase family. Post-translationally, contains an active site 4-methylidene-imidazol-5-one (MIO), which is formed autocatalytically by cyclization and dehydration of residues Ala-Ser-Gly.

It is found in the cytoplasm. It catalyses the reaction L-histidine = trans-urocanate + NH4(+). It participates in amino-acid degradation; L-histidine degradation into L-glutamate; N-formimidoyl-L-glutamate from L-histidine: step 1/3. This is Histidine ammonia-lyase from Bacillus velezensis (strain DSM 23117 / BGSC 10A6 / LMG 26770 / FZB42) (Bacillus amyloliquefaciens subsp. plantarum).